The chain runs to 276 residues: Probable endonuclease 4 (276 aa).

9 residues coordinate Zn(2+): histidine 70, histidine 108, glutamate 143, aspartate 176, histidine 179, histidine 210, aspartate 223, histidine 225, and glutamate 255.

The protein belongs to the AP endonuclease 2 family. It depends on Zn(2+) as a cofactor.

The enzyme catalyses Endonucleolytic cleavage to 5'-phosphooligonucleotide end-products.. In terms of biological role, endonuclease IV plays a role in DNA repair. It cleaves phosphodiester bonds at apurinic or apyrimidinic (AP) sites, generating a 3'-hydroxyl group and a 5'-terminal sugar phosphate. This chain is Probable endonuclease 4, found in Mesomycoplasma hyopneumoniae (strain 7448) (Mycoplasma hyopneumoniae).